The following is a 449-amino-acid chain: 23S rRNA (uracil(1939)-C(5))-methyltransferase RlmD (449 aa).

The TRAM domain occupies 1–66; it reads MGRSRYHNKL…AKFDEAKVVE (66 aa). Positions 79, 85, 88, and 169 each coordinate [4Fe-4S] cluster. Q280, F309, N314, E330, N357, and D379 together coordinate S-adenosyl-L-methionine. C405 serves as the catalytic Nucleophile.

The protein belongs to the class I-like SAM-binding methyltransferase superfamily. RNA M5U methyltransferase family. RlmD subfamily.

It catalyses the reaction uridine(1939) in 23S rRNA + S-adenosyl-L-methionine = 5-methyluridine(1939) in 23S rRNA + S-adenosyl-L-homocysteine + H(+). Catalyzes the formation of 5-methyl-uridine at position 1939 (m5U1939) in 23S rRNA. In Francisella tularensis subsp. holarctica (strain LVS), this protein is 23S rRNA (uracil(1939)-C(5))-methyltransferase RlmD.